Consider the following 251-residue polypeptide: tRNA pseudouridine synthase A (251 aa).

Residue Asp26 is the Nucleophile of the active site. Position 98 (Tyr98) interacts with substrate.

It belongs to the tRNA pseudouridine synthase TruA family. As to quaternary structure, homodimer.

The enzyme catalyses uridine(38/39/40) in tRNA = pseudouridine(38/39/40) in tRNA. In terms of biological role, formation of pseudouridine at positions 38, 39 and 40 in the anticodon stem and loop of transfer RNAs. The sequence is that of tRNA pseudouridine synthase A from Mycolicibacterium paratuberculosis (strain ATCC BAA-968 / K-10) (Mycobacterium paratuberculosis).